The primary structure comprises 143 residues: Cytotoxic L-amino-acid oxidase (143 aa).

Belongs to the flavin monoamine oxidase family. It depends on FAD as a cofactor.

It carries out the reaction an L-alpha-amino acid + O2 + H2O = a 2-oxocarboxylate + H2O2 + NH4(+). Functionally, cytotoxic L-amino acid oxidase with high oxidase activity towards DL-methionine and L-methionine, L-phenylalanine, DL-norleucine, L-isoleucine, L-arginine, L-tyrosine, and DL-leucine. Shows relatively low activity towards DL-lysine and L-lysine, DL-asparagine, DL-valine, L-histidine, DL-threonine, DL-tryptophan, and L-glutamic acid; and no activity towards L-cysteine, L-glycine, L-proline, L-oxyproline, DL-serine, and DL-aspartic acid. Does not use benzylamine, ethanolamine, diethylamine, meta- and para-phenylendiamine, ortho-, meta- and para-aminophenols, or putrescin as a substrate. Acts as a toxin by inducing chromatin condensation, as well as DNA and nucleus fragmentation, which are typical for apoptosis. Probably induces cell damage indirectly via the generation of free radicals and oxidant agents that can trigger cell impairment and apoptosis by a caspase-independent pathway. The protein is Cytotoxic L-amino-acid oxidase of Amanita phalloides (Death cap).